The primary structure comprises 1149 residues: Beta-alanine-activating enzyme (1149 aa).

ATP is bound by residues Thr178–Lys186, Asp408, Arg422, and Lys543. In terms of domain architecture, Carrier spans Ala570–Thr646. Ser605 is subject to O-(pantetheine 4'-phosphoryl)serine. The segment at Pro653–Ser683 is disordered.

It belongs to the ATP-dependent AMP-binding enzyme family.

Covalently binds beta-alanine in an ATP-dependent manner to form a thioester bond with its phosphopantetheine group and transfers it to an, as yet, unknown acceptor. May be required for a post-translational protein modification or for post-transcriptional modification of an RNA. The protein is Beta-alanine-activating enzyme (aasdh) of Danio rerio (Zebrafish).